We begin with the raw amino-acid sequence, 673 residues long: B3 domain-containing protein Os01g0905400 (673 aa).

Over residues 1–34 (MVELIKVPKIEQEEGNADSHGKEKADVVHEEKTE) the composition is skewed to basic and acidic residues. Positions 1–44 (MVELIKVPKIEQEEGNADSHGKEKADVVHEEKTEKVKRRRKRVS) are disordered. Positions 79-172 (LPSFFKIMVG…VFTVQIFAIS (94 aa)) form a DNA-binding region, TF-B3 1. Residues 315-337 (PSFSYPESSNVMTADKESERSHQ) are disordered. The segment covering 328–337 (ADKESERSHQ) has biased composition (basic and acidic residues). The segment at residues 576 to 671 (SKKFCITIPP…ELSFQVLVPN (96 aa)) is a DNA-binding region (TF-B3 2).

It is found in the nucleus. The polypeptide is B3 domain-containing protein Os01g0905400 (Oryza sativa subsp. japonica (Rice)).